Consider the following 219-residue polypeptide: 2-hydroxy-3-keto-5-methylthiopentenyl-1-phosphate phosphatase (219 aa).

Belongs to the HAD-like hydrolase superfamily. MtnX family.

The enzyme catalyses 2-hydroxy-5-methylsulfanyl-3-oxopent-1-enyl phosphate + H2O = 1,2-dihydroxy-5-(methylsulfanyl)pent-1-en-3-one + phosphate. The protein operates within amino-acid biosynthesis; L-methionine biosynthesis via salvage pathway; L-methionine from S-methyl-5-thio-alpha-D-ribose 1-phosphate: step 4/6. In terms of biological role, dephosphorylates 2-hydroxy-3-keto-5-methylthiopentenyl-1-phosphate (HK-MTPenyl-1-P) yielding 1,2-dihydroxy-3-keto-5-methylthiopentene (DHK-MTPene). In Bacillus anthracis (strain A0248), this protein is 2-hydroxy-3-keto-5-methylthiopentenyl-1-phosphate phosphatase.